Here is a 293-residue protein sequence, read N- to C-terminus: Tyrosine recombinase XerD (293 aa).

Positions Met1–Leu83 constitute a Core-binding (CB) domain. The Tyr recombinase domain maps to His104–His287. Active-site residues include Arg144, Lys168, His239, Arg242, and His265. The O-(3'-phospho-DNA)-tyrosine intermediate role is filled by Tyr274.

It belongs to the 'phage' integrase family. XerD subfamily. Forms a cyclic heterotetrameric complex composed of two molecules of XerC and two molecules of XerD.

It is found in the cytoplasm. In terms of biological role, site-specific tyrosine recombinase, which acts by catalyzing the cutting and rejoining of the recombining DNA molecules. The XerC-XerD complex is essential to convert dimers of the bacterial chromosome into monomers to permit their segregation at cell division. It also contributes to the segregational stability of plasmids. The protein is Tyrosine recombinase XerD of Lacticaseibacillus casei (Lactobacillus casei).